The primary structure comprises 234 residues: Thiamine import ATP-binding protein ThiQ (234 aa).

Positions 2–230 (LTLQQVHYYY…HSHPELVEFF (229 aa)) constitute an ABC transporter domain. 32–39 (GPSGAGKS) contacts ATP.

Belongs to the ABC transporter superfamily. Thiamine importer (TC 3.A.1.19.1) family. In terms of assembly, the complex is composed of two ATP-binding proteins (ThiQ), two transmembrane proteins (ThiP) and a solute-binding protein (ThiB).

It is found in the cell inner membrane. The catalysed reaction is thiamine(out) + ATP + H2O = thiamine(in) + ADP + phosphate + H(+). Functionally, part of the ABC transporter complex ThiBPQ involved in thiamine import. Responsible for energy coupling to the transport system. The protein is Thiamine import ATP-binding protein ThiQ of Vibrio vulnificus (strain CMCP6).